The following is a 128-amino-acid chain: UPF0102 protein PSPTO_4420 (128 aa).

Belongs to the UPF0102 family.

The polypeptide is UPF0102 protein PSPTO_4420 (Pseudomonas syringae pv. tomato (strain ATCC BAA-871 / DC3000)).